A 628-amino-acid polypeptide reads, in one-letter code: uncharacterized protein (628 aa).

2 disordered regions span residues 1–65 (MDTN…ISSA) and 80–125 (SLRN…VSLS). Residues 12–21 (ISPSIASSFP) are compositionally biased toward low complexity. Over residues 25 to 37 (PFSSQNSTTSNPE) the composition is skewed to polar residues. Low complexity-rich tracts occupy residues 48–64 (SSII…NISS) and 87–102 (SPHI…SSSS). Basic and acidic residues predominate over residues 103–116 (DLDKSMLDEKHPDS). 12 helical membrane-spanning segments follow: residues 157–177 (IITC…SISL), 203–223 (VGTG…NLLM), 230–250 (LWLS…AVLG), 259–279 (FIAL…GFAF), 294–314 (IGWY…LSAA), 324–344 (LYGY…QGLF), 417–437 (LWPP…LVNY), 454–474 (VSLL…TVLP), 483–503 (MLFF…TTFV), 511–531 (VGLL…MTWV), 542–562 (VGVA…SVVA), and 583–603 (MCGM…VQKF).

Belongs to the major facilitator superfamily. Allantoate permease family.

The protein localises to the membrane. This is an uncharacterized protein from Schizosaccharomyces pombe (strain 972 / ATCC 24843) (Fission yeast).